Here is a 770-residue protein sequence, read N- to C-terminus: MKAKVVINLVKINKKIIPDKIYVYRLFNDPEEELQKEGYSIYRLAYENVGIVIDPENLIIATTKELEYEGEFIPEGEISFSELRNDYQSKLVLRLLKENGIGEYELSKLLRKFRKPKTFGDYKVIPSVEMSVIKHDEDFYLVIHIIHQIQSMKTLWELVNKDPKELEEFLMTHKENLMLKDIASPLKTVYKPCFEEYTKKPKLDHNQEIVKYWYNYHIERYWNTPEAKLEFYRKFGQVDLKQPAILAKFASKIKKNKNYKIYLLPQLVVPTYNAEQLESDVAKEILEYTKLMPEERKELLENILAEVDSDIIDKSLSEIEVEKIAQELENKIRVRDDKGNSVPISQLNVQKSQLLLWTNYSRKYPVILPYEVPEKFRKIREIPMFIILDSGLLADIQNFATNEFRELVKSMYYSLAKKYNSLAKKARSTNEIGLPFLDFRGKEKVITEDLNSDKGIIEVVEQVSSFMKGKELGLAFIAARNKLSSEKFEEIKRRLFNLNVISQVVNEDTLKNKRDKYDRNRLDLFVRHNLLFQVLSKLGVKYYVLDYRFNYDYIIGIDVAPMKRSEGYIGGSAVMFDSQGYIRKIVPIKIGEQRGESVDMNEFFKEMVDKFKEFNIKLDNKKILLLRDGRITNNEEEGLKYISEMFDIEVVTMDVIKNHPVRAFANMKMYFNLGGAIYLIPHKLKQAKGTPIPIKLAKKRIIKNGKVEKQSITRQDVLDIFILTRLNYGSISADMRLPAPVHYAHKFANAIRNEWKIKEEFLAEGFLYFV.

Residues 1–151 (MKAKVVINLV…VIHIIHQIQS (151 aa)) form an N-terminal domain region. Residues 154–272 (TLWELVNKDP…LLPQLVVPTY (119 aa)) form the PAZ domain. The segment at 276-361 (QLESDVAKEI…SQLLLWTNYS (86 aa)) is interdomain connector. The segment at 362 to 544 (RKYPVILPYE…LSKLGVKYYV (183 aa)) is mid domain. In terms of domain architecture, Piwi spans 473–756 (GLAFIAARNK…FANAIRNEWK (284 aa)). Catalysis depends on residues aspartate 558, glutamate 596, aspartate 628, and histidine 745. A Mn(2+)-binding site is contributed by aspartate 558. Residues aspartate 628, histidine 745, and valine 770 each coordinate Mn(2+).

Belongs to the argonaute family. Long pAgo subfamily. As to quaternary structure, monomer. Requires Mn(2+) as cofactor.

Its activity is regulated as follows. Inhibited at greater than 500 mM NaCl. In terms of biological role, a DNA-guided ssDNA endonuclease that may play a role in defense against invading mobile genetic elements. Uses short 5'-phospho-ssDNA sequences as guides (gDNA) to bind complementary target strands, resulting in cleavage of the target DNA (tDNA). Endonucleolytically cleaves DNA in short dsDNA (the gDNA indicates where to cleave on the tDNA). Efficient guide-dependent target DNA cleavage requires a minimal gDNA length of 15 nucleotides (nt) and works up to at least 31 nt. Overexpression decreases plasmid transformation efficiency. Has no appreciable activity with gRNA or on target RNA. Also has guide-independent activity on plasmid DNA called 'chopping'. The cleavage site is 10 nucleotides (nt) downstream of the target residue base-paired with the 5'-end of the gDNA, cleavage is insensitive to adenine methylation. DNA cleavage produces 5'-phosphomonoesters (as it can be ligated by T4 DNA ligase). The polypeptide is Protein argonaute (Pyrococcus furiosus (strain ATCC 43587 / DSM 3638 / JCM 8422 / Vc1)).